The sequence spans 1534 residues: DNA-directed RNA polymerase subunit beta'' (1534 aa).

4 residues coordinate Zn(2+): Cys-220, Cys-296, Cys-303, and Cys-306. 2 stretches are compositionally biased toward basic and acidic residues: residues 644–668 and 678–688; these read RTQE…RTRE and PENKYRTREGE. Disordered regions lie at residues 644-698 and 719-800; these read RTQE…EDEY and YRTL…KKEG. Composition is skewed to acidic residues over residues 744-762 and 770-789; these read GEYE…SSED and TLEE…EYGS.

This sequence belongs to the RNA polymerase beta' chain family. RpoC2 subfamily. In plastids the minimal PEP RNA polymerase catalytic core is composed of four subunits: alpha, beta, beta', and beta''. When a (nuclear-encoded) sigma factor is associated with the core the holoenzyme is formed, which can initiate transcription. The cofactor is Zn(2+).

The protein localises to the plastid. Its subcellular location is the chloroplast. It carries out the reaction RNA(n) + a ribonucleoside 5'-triphosphate = RNA(n+1) + diphosphate. Functionally, DNA-dependent RNA polymerase catalyzes the transcription of DNA into RNA using the four ribonucleoside triphosphates as substrates. The protein is DNA-directed RNA polymerase subunit beta'' of Saccharum officinarum (Sugarcane).